The following is a 325-amino-acid chain: Sensor histidine kinase YxdK (325 aa).

Topologically, residues 1 to 8 (MKLFLRSH) are cytoplasmic. A helical transmembrane segment spans residues 9-29 (AVLILLFLLQGLFVFFYYWFA). Residues 30-33 (GLHS) lie on the Extracellular side of the membrane. The chain crosses the membrane as a helical span at residues 34-54 (FSHLFYILGVQLLILAGYLAY). The Cytoplasmic segment spans residues 55 to 325 (RWYKDRGVYH…SVRFSFLTKM (271 aa)). A Histidine kinase domain is found at 118 to 325 (QWVHQVKTPL…SVRFSFLTKM (208 aa)). Residue His121 is modified to Phosphohistidine; by autocatalysis.

The protein localises to the cell membrane. It catalyses the reaction ATP + protein L-histidine = ADP + protein N-phospho-L-histidine.. Functionally, probable member of the two-component regulatory system YxdK/YxdJ. May activate YxdJ in response to the antibacterial protein LL-37. The protein is Sensor histidine kinase YxdK (yxdK) of Bacillus subtilis (strain 168).